We begin with the raw amino-acid sequence, 165 residues long: Protein NKG7 (165 aa).

Helical transmembrane passes span 9–29 (LLTS…NFWF), 61–81 (FCIL…MSCI), 92–112 (IVST…MTVY), and 133–153 (FYLG…SLGA).

It belongs to the PMP-22/EMP/MP20 family.

The protein localises to the cell membrane. The protein resides in the cytolytic granule membrane. In terms of biological role, regulates cytotoxic granule exocytosis in effector lymphocytes, thus acting as a critical mediator of inflammation in a broad range of infectious and non-infectious diseases. Essential for cytotoxic degranulation of natural killer (NK) cells and CD8(+) T-cells and for the activation of CD4(+) T-cells following infection. Plays a critical role in CD8(+) T-cell and NK cell-mediated cytolysis of target cells and contributes to the cytolytic activity via the perforin/granzyme pathway by enhancing exocytosis of LAMP1-carrying lytic granules. Contributes to NK cell-mediated control of cancer metastasis. This is Protein NKG7 (NKG7) from Bos taurus (Bovine).